Here is a 120-residue protein sequence, read N- to C-terminus: Large ribosomal subunit protein uL22 (120 aa).

The protein belongs to the universal ribosomal protein uL22 family. Part of the 50S ribosomal subunit.

This protein binds specifically to 23S rRNA; its binding is stimulated by other ribosomal proteins, e.g. L4, L17, and L20. It is important during the early stages of 50S assembly. It makes multiple contacts with different domains of the 23S rRNA in the assembled 50S subunit and ribosome. In terms of biological role, the globular domain of the protein is located near the polypeptide exit tunnel on the outside of the subunit, while an extended beta-hairpin is found that lines the wall of the exit tunnel in the center of the 70S ribosome. The chain is Large ribosomal subunit protein uL22 from Rippkaea orientalis (strain PCC 8801 / RF-1) (Cyanothece sp. (strain PCC 8801)).